The following is a 358-amino-acid chain: 3-dehydroquinate synthase (358 aa).

Residues 70–75 (DGEQYK), 104–108 (GVVGD), 128–129 (TT), K141, K150, and 168–171 (CLNT) contribute to the NAD(+) site. Zn(2+) is bound by residues E183, H246, and H263.

Belongs to the sugar phosphate cyclases superfamily. Dehydroquinate synthase family. Co(2+) is required as a cofactor. It depends on Zn(2+) as a cofactor. Requires NAD(+) as cofactor.

The protein localises to the cytoplasm. The enzyme catalyses 7-phospho-2-dehydro-3-deoxy-D-arabino-heptonate = 3-dehydroquinate + phosphate. The protein operates within metabolic intermediate biosynthesis; chorismate biosynthesis; chorismate from D-erythrose 4-phosphate and phosphoenolpyruvate: step 2/7. Catalyzes the conversion of 3-deoxy-D-arabino-heptulosonate 7-phosphate (DAHP) to dehydroquinate (DHQ). This Shewanella sediminis (strain HAW-EB3) protein is 3-dehydroquinate synthase.